The primary structure comprises 77 residues: Small ribosomal subunit protein bS21 (77 aa).

Positions 38-52 (KPSEKRAREKAEAVR) are enriched in basic and acidic residues. Residues 38–77 (KPSEKRAREKAEAVRRTRKLARKRAQREGLISNGRGSPLK) form a disordered region. A compositionally biased stretch (basic residues) spans 53-62 (RTRKLARKRA).

The protein belongs to the bacterial ribosomal protein bS21 family.

In Bartonella henselae (strain ATCC 49882 / DSM 28221 / CCUG 30454 / Houston 1) (Rochalimaea henselae), this protein is Small ribosomal subunit protein bS21.